A 232-amino-acid chain; its full sequence is Sugar fermentation stimulation protein homolog (232 aa).

It belongs to the SfsA family.

The chain is Sugar fermentation stimulation protein homolog from Geobacter metallireducens (strain ATCC 53774 / DSM 7210 / GS-15).